Here is a 324-residue protein sequence, read N- to C-terminus: tRNA-dihydrouridine(20a/20b) synthase [NAD(P)+]-like (324 aa).

Residues 33 to 35 (PMV) and Gln-87 contribute to the FMN site. Cys-116 (proton donor) is an active-site residue. Residues Lys-158, His-186, 216–218 (NGD), and 240–241 (AR) each bind FMN.

It belongs to the Dus family. Dus4 subfamily. FMN serves as cofactor.

The catalysed reaction is 5,6-dihydrouridine(20a) in tRNA + NADP(+) = uridine(20a) in tRNA + NADPH + H(+). It carries out the reaction 5,6-dihydrouridine(20a) in tRNA + NAD(+) = uridine(20a) in tRNA + NADH + H(+). The enzyme catalyses 5,6-dihydrouridine(20b) in tRNA + NAD(+) = uridine(20b) in tRNA + NADH + H(+). It catalyses the reaction 5,6-dihydrouridine(20b) in tRNA + NADP(+) = uridine(20b) in tRNA + NADPH + H(+). In terms of biological role, catalyzes the synthesis of dihydrouridine, a modified base found in the D-loop of most tRNAs. The sequence is that of tRNA-dihydrouridine(20a/20b) synthase [NAD(P)+]-like (Dus4l) from Mus musculus (Mouse).